Here is a 452-residue protein sequence, read N- to C-terminus: Phosphoglucosamine mutase (452 aa).

Serine 103 functions as the Phosphoserine intermediate in the catalytic mechanism. Mg(2+) is bound by residues serine 103, aspartate 244, aspartate 246, and aspartate 248. The residue at position 103 (serine 103) is a Phosphoserine.

This sequence belongs to the phosphohexose mutase family. Mg(2+) serves as cofactor. Post-translationally, activated by phosphorylation.

It catalyses the reaction alpha-D-glucosamine 1-phosphate = D-glucosamine 6-phosphate. Catalyzes the conversion of glucosamine-6-phosphate to glucosamine-1-phosphate. The sequence is that of Phosphoglucosamine mutase from Fusobacterium nucleatum subsp. nucleatum (strain ATCC 25586 / DSM 15643 / BCRC 10681 / CIP 101130 / JCM 8532 / KCTC 2640 / LMG 13131 / VPI 4355).